A 158-amino-acid chain; its full sequence is NAD(P)H-quinone oxidoreductase subunit J, chloroplastic (158 aa).

This sequence belongs to the complex I 30 kDa subunit family. As to quaternary structure, NDH is composed of at least 16 different subunits, 5 of which are encoded in the nucleus.

The protein resides in the plastid. The protein localises to the chloroplast thylakoid membrane. The catalysed reaction is a plastoquinone + NADH + (n+1) H(+)(in) = a plastoquinol + NAD(+) + n H(+)(out). It carries out the reaction a plastoquinone + NADPH + (n+1) H(+)(in) = a plastoquinol + NADP(+) + n H(+)(out). Its function is as follows. NDH shuttles electrons from NAD(P)H:plastoquinone, via FMN and iron-sulfur (Fe-S) centers, to quinones in the photosynthetic chain and possibly in a chloroplast respiratory chain. The immediate electron acceptor for the enzyme in this species is believed to be plastoquinone. Couples the redox reaction to proton translocation, and thus conserves the redox energy in a proton gradient. The sequence is that of NAD(P)H-quinone oxidoreductase subunit J, chloroplastic from Nymphaea alba (White water-lily).